Reading from the N-terminus, the 110-residue chain is UPF0235 protein Mpop_2087 (110 aa).

The protein belongs to the UPF0235 family.

In Methylorubrum populi (strain ATCC BAA-705 / NCIMB 13946 / BJ001) (Methylobacterium populi), this protein is UPF0235 protein Mpop_2087.